The chain runs to 232 residues: Imidazoleglycerol-phosphate dehydratase (232 aa).

The protein belongs to the imidazoleglycerol-phosphate dehydratase family.

The catalysed reaction is D-erythro-1-(imidazol-4-yl)glycerol 3-phosphate = 3-(imidazol-4-yl)-2-oxopropyl phosphate + H2O. The protein operates within amino-acid biosynthesis; L-histidine biosynthesis; L-histidine from 5-phospho-alpha-D-ribose 1-diphosphate: step 6/9. The chain is Imidazoleglycerol-phosphate dehydratase (HIS3) from Lachancea kluyveri (strain ATCC 58438 / CBS 3082 / BCRC 21498 / NBRC 1685 / JCM 7257 / NCYC 543 / NRRL Y-12651) (Yeast).